Reading from the N-terminus, the 604-residue chain is Glucose oxidase (604 aa).

A signal peptide spans 1 to 18 (MKSTIITSILFSVATVQA). 3 residues coordinate FAD: Leu-52, Thr-53, and Glu-73. Asn-111 is a glycosylation site (N-linked (GlcNAc...) asparagine). The FAD site is built by Ser-125, Asn-129, Gly-130, and Ser-132. A disulfide bond links Cys-186 and Cys-228. An N-linked (GlcNAc...) asparagine glycan is attached at Asn-213. Val-272 is a binding site for FAD. N-linked (GlcNAc...) asparagine glycosylation is found at Asn-278, Asn-409, and Asn-531. Residue His-537 is the Proton acceptor of the active site. Lys-558 and Val-559 together coordinate O2. FAD is bound by residues Gly-570 and Met-582.

It belongs to the GMC oxidoreductase family. In terms of assembly, homodimer. FAD is required as a cofactor.

The protein localises to the secreted. It is found in the cell wall. The protein resides in the cytoplasm. Its subcellular location is the extracellular space. It localises to the extracellular matrix. The catalysed reaction is beta-D-glucose + O2 = D-glucono-1,5-lactone + H2O2. In terms of biological role, glucose oxidase catalyzes the oxidation of beta-D-glucose to D-glucono-delta-lactone and hydrogen peroxide in the presence of molecular oxygen. The enzyme also catalyzes the reaction with D-xylose but at a much lower rate. Shows any activities against D-fructose, D-galactose and D-arabinose. The enzyme is cytotoxic for a series of bacteria, yeasts and filamentous fungi and acts primarily via the liberation of H(2)O(2), which is a harmful oxidative stress-generating agent. This Penicillium chrysogenum (Penicillium notatum) protein is Glucose oxidase.